Reading from the N-terminus, the 470-residue chain is MKNFLCEDFLLSNETARRLYHEHAFHQPIYDYHCHLNPAEVAQNRQFDNLGQIWLEGDHYKWRGMRSAGIEERLITGDASDYDKYMAWAKTVPQTLGNPLYHWTHLELRRPFGITNALFSPDTADQIWHQCNELLATPEFTARGIMQQMNVVMAGTTDDPIDSLEHHKAIAEDDTFNVKVLPSWRPDKAFKIELDVFADYMHKLGEVADIEIRRFDDLLSALDKRLAHFDAHGCRAADHGIEIVRYAPIPSEADLDALLARRLSGEVLSELECAQFSTAVQVWLGKRYAQLGWVMQLHIGAQRNNSTRMFQLLGADAGFDSIGDRPFAFELAHLLDEMDQTNELPRTILYCLNPRDNEMMATMIGNFQGGGIAGKVQFGSGWWFNDQKDGMQRQMEQLSQLGLLSQFVGMLTDSRSFLSYTRHEYFRRILCDMVGRWAENGEVPNDLSLLGPMVEDICFGNAKRYFEERA.

This sequence belongs to the metallo-dependent hydrolases superfamily. Uronate isomerase family.

It catalyses the reaction D-glucuronate = D-fructuronate. The catalysed reaction is aldehydo-D-galacturonate = keto-D-tagaturonate. It functions in the pathway carbohydrate metabolism; pentose and glucuronate interconversion. The chain is Uronate isomerase from Vibrio vulnificus (strain YJ016).